We begin with the raw amino-acid sequence, 194 residues long: Protein LKAAEAR1 (194 aa).

A disordered region spans residues 1–45; the sequence is MPPPAKEGGRKGPRERSGKSAPGTAQGEERAKGAPATEPPKPGWA. Residues 7–18 are compositionally biased toward basic and acidic residues; the sequence is EGGRKGPRERSG.

The protein is Protein LKAAEAR1 (LKAAEAR1) of Homo sapiens (Human).